The sequence spans 576 residues: MLKYRTLSRSCHIFHPKSLSNNTLKSETTQELLQTVGFVRRSQVGLFQWLPLGLRSLNKVSNAIRNRMDSDGGAIEVSLSAISSKALWQATDRWNNSELFKLKDSKGKQYCLTATCEEDITDLMKNYIASYKDMPITIYQMTRKYRDEIRPRGGILRGREFLMKDAYSFASNEEDAFASFQKLDDTYNKIFKDLKIPFVSAWADSGDIGGEFSKEFHLIHESGEDTLMSCKHCGDISTLDMSQSYPEKDGQYSGDVDCKYALTKDHSTLICFYYPKDRQLNWNLALNAMDKDIDLTLRNKPNDHVLQVYEKDNEDIMFSKILRVMDCRLNSKSNFPDFPLKKYLKNNFGQISDVSIVDAQENEICGKCEEGRLEPLKSIEVGHIFLLGNKYSKPLNVKFVDKENKNETFVHMGCYGIGVSRLVGAIAELGRDSNGFRWPAIMAPYKVSICTGPNNPENSQRLQDVKSELLNDPTMQNLQNDILDQFNEKLGIGARIKLSHAMGIPLCVIVGSKSWPNVEIEVRGIRWGEKDLWRKQFEKRCSELQWKCTKNEHGIEKHTVPIQHLAEVIGVLLKDM.

The protein belongs to the class-II aminoacyl-tRNA synthetase family.

The protein localises to the mitochondrion. The catalysed reaction is tRNA(Pro) + L-proline + ATP = L-prolyl-tRNA(Pro) + AMP + diphosphate. The protein is Probable proline--tRNA ligase, mitochondrial (AIM10) of Saccharomyces cerevisiae (strain ATCC 204508 / S288c) (Baker's yeast).